Here is a 390-residue protein sequence, read N- to C-terminus: Glucose-fructose oxidoreductase domain-containing protein 1 (390 aa).

The signal sequence occupies residues 1–21 (MLPGVGVFGTSLTSRVIIPLL). N-linked (GlcNAc...) asparagine glycans are attached at residues Asn161, Asn270, and Asn354.

It belongs to the Gfo/Idh/MocA family. As to quaternary structure, homodimer.

It localises to the secreted. Probably catalytically inactive enzyme. Does not bind NAD or NADP. The protein is Glucose-fructose oxidoreductase domain-containing protein 1 (gfod1) of Xenopus tropicalis (Western clawed frog).